Consider the following 63-residue polypeptide: Large ribosomal subunit protein uL30 (63 aa).

The protein belongs to the universal ribosomal protein uL30 family. In terms of assembly, part of the 50S ribosomal subunit.

This is Large ribosomal subunit protein uL30 from Granulibacter bethesdensis (strain ATCC BAA-1260 / CGDNIH1).